A 147-amino-acid polypeptide reads, in one-letter code: Response regulator Rcp1 (147 aa).

The Response regulatory domain maps to 10-135; it reads VILLVEDSKA…DLFKMVQGIE (126 aa). Aspartate 68 carries the post-translational modification 4-aspartylphosphate.

Phosphorylated by Cph1.

Its function is as follows. Forms a two-component system with Cph1 in which it acts as receiver substrate. This Synechocystis sp. (strain ATCC 27184 / PCC 6803 / Kazusa) protein is Response regulator Rcp1 (rcp1).